We begin with the raw amino-acid sequence, 149 residues long: UPF0208 membrane protein VSAL_I2111 (149 aa).

2 helical membrane-spanning segments follow: residues 41-61 (FAVK…MVFN) and 69-89 (SIII…WLGN).

The protein belongs to the UPF0208 family.

It localises to the cell inner membrane. The polypeptide is UPF0208 membrane protein VSAL_I2111 (Aliivibrio salmonicida (strain LFI1238) (Vibrio salmonicida (strain LFI1238))).